We begin with the raw amino-acid sequence, 379 residues long: S-adenosylmethionine synthase (379 aa).

Residue histidine 15 coordinates ATP. Residue aspartate 17 coordinates Mg(2+). Position 43 (glutamate 43) interacts with K(+). The L-methionine site is built by glutamate 56 and glutamine 99. Residues 99-109 are flexible loop; sequence QSPDITQGVDR. ATP is bound by residues 164–166, 230–231, aspartate 239, 245–246, alanine 262, and lysine 266; these read DAK, RF, and RK. L-methionine is bound at residue aspartate 239. An L-methionine-binding site is contributed by lysine 270.

The protein belongs to the AdoMet synthase family. As to quaternary structure, homotetramer; dimer of dimers. Mg(2+) is required as a cofactor. The cofactor is K(+).

It localises to the cytoplasm. The catalysed reaction is L-methionine + ATP + H2O = S-adenosyl-L-methionine + phosphate + diphosphate. The protein operates within amino-acid biosynthesis; S-adenosyl-L-methionine biosynthesis; S-adenosyl-L-methionine from L-methionine: step 1/1. Its function is as follows. Catalyzes the formation of S-adenosylmethionine (AdoMet) from methionine and ATP. The overall synthetic reaction is composed of two sequential steps, AdoMet formation and the subsequent tripolyphosphate hydrolysis which occurs prior to release of AdoMet from the enzyme. The chain is S-adenosylmethionine synthase from Buchnera aphidicola subsp. Schizaphis graminum (strain Sg).